The sequence spans 258 residues: 5'-nucleotidase SurE (258 aa).

A divalent metal cation contacts are provided by Asp8, Asp9, Ser40, and Asn92.

Belongs to the SurE nucleotidase family. The cofactor is a divalent metal cation.

Its subcellular location is the cytoplasm. The catalysed reaction is a ribonucleoside 5'-phosphate + H2O = a ribonucleoside + phosphate. Nucleotidase that shows phosphatase activity on nucleoside 5'-monophosphates. In Brucella anthropi (strain ATCC 49188 / DSM 6882 / CCUG 24695 / JCM 21032 / LMG 3331 / NBRC 15819 / NCTC 12168 / Alc 37) (Ochrobactrum anthropi), this protein is 5'-nucleotidase SurE.